Reading from the N-terminus, the 261-residue chain is Expansin-B2 (261 aa).

Positions 1–24 are cleaved as a signal peptide; the sequence is MAGASAKVVAMLLSVLATYGFAAG. Residues 51–157 enclose the Expansin-like EG45 domain; sequence GGACGFKNTN…RRVPCYHRGL (107 aa). 3 disulfides stabilise this stretch: cysteine 54/cysteine 82, cysteine 85/cysteine 152, and cysteine 90/cysteine 96. Positions 170–256 constitute an Expansin-like CBD domain; sequence VYLAVLVEFA…NWRANTNYGS (87 aa).

This sequence belongs to the expansin family. Expansin B subfamily. As to expression, expressed in roots.

The protein resides in the secreted. The protein localises to the cell wall. It is found in the membrane. In terms of biological role, may cause loosening and extension of plant cell walls by disrupting non-covalent bonding between cellulose microfibrils and matrix glucans. No enzymatic activity has been found. May be required for rapid internodal elongation in deepwater rice during submergence. In Oryza sativa subsp. japonica (Rice), this protein is Expansin-B2 (EXPB2).